Here is a 298-residue protein sequence, read N- to C-terminus: Super small secreted glycoprotein (298 aa).

A signal peptide spans 1–32 (MGVTGILQLPRDRFKRTSFFLWVIILFQRTFS). A glycan (N-linked (GlcNAc...) asparagine; by host) is linked at Asn40. 2 disulfide bridges follow: Cys108–Cys135 and Cys121–Cys147. N-linked (GlcNAc...) asparagine; by host glycosylation is found at Asn204, Asn228, Asn238, Asn257, and Asn268.

Belongs to the filoviruses glycoprotein family.

The protein localises to the secreted. The protein is Super small secreted glycoprotein (GP) of Epomops franqueti (Franquet's epauletted fruit bat).